Here is a 212-residue protein sequence, read N- to C-terminus: Protein GrpE (212 aa).

The disordered stretch occupies residues 1-69 (MAEMSNNKTS…LESAKKEIES (69 aa)). Over residues 40-60 (ETTQTESMETAETETSLQTEL) the composition is skewed to low complexity.

The protein belongs to the GrpE family. Homodimer.

It localises to the cytoplasm. Functionally, participates actively in the response to hyperosmotic and heat shock by preventing the aggregation of stress-denatured proteins, in association with DnaK and GrpE. It is the nucleotide exchange factor for DnaK and may function as a thermosensor. Unfolded proteins bind initially to DnaJ; upon interaction with the DnaJ-bound protein, DnaK hydrolyzes its bound ATP, resulting in the formation of a stable complex. GrpE releases ADP from DnaK; ATP binding to DnaK triggers the release of the substrate protein, thus completing the reaction cycle. Several rounds of ATP-dependent interactions between DnaJ, DnaK and GrpE are required for fully efficient folding. The sequence is that of Protein GrpE from Leptospira interrogans serogroup Icterohaemorrhagiae serovar Lai (strain 56601).